Consider the following 238-residue polypeptide: Large ribosomal subunit protein uL1 (238 aa).

This sequence belongs to the universal ribosomal protein uL1 family. Part of the 50S ribosomal subunit.

In terms of biological role, binds directly to 23S rRNA. The L1 stalk is quite mobile in the ribosome, and is involved in E site tRNA release. Its function is as follows. Protein L1 is also a translational repressor protein, it controls the translation of the L11 operon by binding to its mRNA. The sequence is that of Large ribosomal subunit protein uL1 from Rippkaea orientalis (strain PCC 8801 / RF-1) (Cyanothece sp. (strain PCC 8801)).